A 272-amino-acid chain; its full sequence is 3-methyl-2-oxobutanoate hydroxymethyltransferase (272 aa).

Residues aspartate 54 and aspartate 93 each coordinate Mg(2+). Residues 54–55 (DS), aspartate 93, and lysine 123 contribute to the 3-methyl-2-oxobutanoate site. A Mg(2+)-binding site is contributed by glutamate 125. Residue glutamate 190 is the Proton acceptor of the active site.

Belongs to the PanB family. As to quaternary structure, homodecamer; pentamer of dimers. Requires Mg(2+) as cofactor.

Its subcellular location is the cytoplasm. It carries out the reaction 3-methyl-2-oxobutanoate + (6R)-5,10-methylene-5,6,7,8-tetrahydrofolate + H2O = 2-dehydropantoate + (6S)-5,6,7,8-tetrahydrofolate. Its pathway is cofactor biosynthesis; (R)-pantothenate biosynthesis; (R)-pantoate from 3-methyl-2-oxobutanoate: step 1/2. Its function is as follows. Catalyzes the reversible reaction in which hydroxymethyl group from 5,10-methylenetetrahydrofolate is transferred onto alpha-ketoisovalerate to form ketopantoate. This chain is 3-methyl-2-oxobutanoate hydroxymethyltransferase, found in Tropheryma whipplei (strain Twist) (Whipple's bacillus).